The following is a 237-amino-acid chain: Ribosomal RNA small subunit methyltransferase G (237 aa).

S-adenosyl-L-methionine contacts are provided by residues Gly-78, Phe-83, Ala-129–Glu-130, and Arg-148. The disordered stretch occupies residues Lys-218 to Leu-237.

This sequence belongs to the methyltransferase superfamily. RNA methyltransferase RsmG family.

The protein localises to the cytoplasm. In terms of biological role, specifically methylates the N7 position of a guanine in 16S rRNA. The protein is Ribosomal RNA small subunit methyltransferase G of Streptococcus sanguinis (strain SK36).